A 222-amino-acid polypeptide reads, in one-letter code: Twisted gastrulation protein homolog 1 (222 aa).

The signal sequence occupies residues 1–24 (MKSHYIVLALASLTFLLCLPVSQS). Residues Asn-80 and Asn-146 are each glycosylated (N-linked (GlcNAc...) asparagine).

Belongs to the twisted gastrulation protein family. Interacts with CHRD and/or BMP4. This interaction enhances CHRD/BMP4 complex formation. Interacts with BMP7. As to expression, expressed in lymph node, liver, kidney, and lung. Expression in the kidney was stronger in the medulla than in the cortex, particularly in the cells surrounding the medullary tubules. Expressed in growth plate cartilage of long bones, ribs, and digits and to a lesser extent also in the resting zone of the epiphysis, trabecular bone, and vertebral cartilage. Expression seems to be absent from other skeletal tissues including muscle, skin, and fibroblasts.

Its subcellular location is the secreted. Its function is as follows. May be involved in dorsoventral axis formation. Seems to antagonize BMP signaling by forming ternary complexes with CHRD and BMPs, thereby preventing BMPs from binding to their receptors. In addition to the anti-BMP function, also has pro-BMP activity, partly mediated by cleavage and degradation of CHRD, which releases BMPs from ternary complexes. May be an important modulator of BMP-regulated cartilage development and chondrocyte differentiation. May play a role in thymocyte development. In Mus musculus (Mouse), this protein is Twisted gastrulation protein homolog 1 (Twsg1).